Here is a 149-residue protein sequence, read N- to C-terminus: UPF0756 membrane protein BBR47_32760 (149 aa).

Helical transmembrane passes span 3 to 23 (WISI…NATV), 48 to 68 (HGLQ…LASG), 85 to 105 (LLAV…TVLM), 106 to 126 (SQNP…VTFF), and 128 to 148 (GVAV…QFLP).

Belongs to the UPF0756 family.

Its subcellular location is the cell membrane. This Brevibacillus brevis (strain 47 / JCM 6285 / NBRC 100599) protein is UPF0756 membrane protein BBR47_32760.